The following is a 297-amino-acid chain: MPPRRYNPDTRRDELLERINLDIPGAVAQALREDLGGTVDANNDITAKLLPENSRSHATVITRENGVFCGKRWVEEVFIQLAGDDVTIIWHVDDGDVINANQSLFELEGPSRVLLTGERTALNFVQTLSGVASKVRHYVELLEGTNTQLLDTRKTLPGLRSALKYAVLCGGGANHRLGLSDAFLIKENHIIASGSVRQAVEKASWLHPDAPVEVEVENLEELDEALKAGADIIMLDNFETEQMREAVKRTNGKALLEVSGNVTDKTLREFAETGVDFISVGALTKHVQALDLSMRFR.

Residues arginine 119, 152 to 154 (TRK), arginine 176, lysine 186, glutamate 215, aspartate 236, 259 to 261 (SGN), and 280 to 282 (VGA) each bind substrate.

This sequence belongs to the NadC/ModD family. In terms of assembly, homodimer Hexamer formed by 3 homodimers. Homodimer.

It catalyses the reaction nicotinate beta-D-ribonucleotide + CO2 + diphosphate = quinolinate + 5-phospho-alpha-D-ribose 1-diphosphate + 2 H(+). The protein operates within cofactor biosynthesis; NAD(+) biosynthesis; nicotinate D-ribonucleotide from quinolinate: step 1/1. Its function is as follows. Involved in the catabolism of quinolinic acid (QA). The chain is Nicotinate-nucleotide pyrophosphorylase [carboxylating] (nadC) from Escherichia coli (strain K12).